We begin with the raw amino-acid sequence, 459 residues long: MGIGFKGRKTLLRELVKYMVTLCISLVVLALLYIFINTIAMNTGFSHPANYNEREAEKLAPKLETIDKVTADMIPDTMSYAILNKETKQKTAGTIKEKDLQLVKKKIEKKPYVNYKQKGYLVIERNNEYCVLQYSLRADFSSPLLRKYLPNYELTSICILIILLIIVISIITTYFANRLRKHFETLNVITRYIKEQNLQFTPEFTHIKEFDDVIDSLIEMRDALQSSLEALWRLEKNKKEQIGALAHEIKIPITIIKGNAELLSLSMQNEEQAEYTKYILGAGNQIEQYIYQLIHLSKTEDALTIHLEKASVDELTETLVKDISAYKGNKNINISFKKENLMKEAKIDWQLLHRALLNILTNAVDYTPEGGTVSVHAECDSEIFYFFVKDTGNGFSEMGLKKATELFYMDDKSRHSKGHYGMGLTFAKNAVNLHNGELTLGNTIAGGAEVRVKIPLRNE.

At 1–18 the chain is on the cytoplasmic side; sequence MGIGFKGRKTLLRELVKY. The chain crosses the membrane as a helical span at residues 19–39; the sequence is MVTLCISLVVLALLYIFINTI. Topologically, residues 40-155 are extracellular; that stretch reads AMNTGFSHPA…RKYLPNYELT (116 aa). The helical transmembrane segment at 156 to 176 threads the bilayer; sequence SICILIILLIIVISIITTYFA. At 177–459 the chain is on the cytoplasmic side; sequence NRLRKHFETL…VRVKIPLRNE (283 aa). One can recognise a Histidine kinase domain in the interval 244–458; sequence ALAHEIKIPI…EVRVKIPLRN (215 aa). Histidine 247 bears the Phosphohistidine; by autocatalysis mark.

It localises to the cell membrane. The catalysed reaction is ATP + protein L-histidine = ADP + protein N-phospho-L-histidine.. Member of the two-component regulatory system SpaK/SpaR involved in the regulation of the biosynthesis of lantibiotic subtilin. SpaK may function as a membrane-associated protein kinase that phosphorylates SpaR in response to environmental signals. This is Sensor histidine kinase SpaK (spaK) from Bacillus subtilis.